The primary structure comprises 410 residues: Tyrosine--tRNA ligase (410 aa).

Y36 contacts L-tyrosine. A 'HIGH' region motif is present at residues 41–50; the sequence is ATADSLTAGH. L-tyrosine contacts are provided by Y169 and Q173. The 'KMSKS' region signature appears at 229–233; it reads KMGKT. Position 232 (K232) interacts with ATP. One can recognise an S4 RNA-binding domain in the interval 343–409; it reads IDLITMMIDA…GKKAYHLFRA (67 aa).

This sequence belongs to the class-I aminoacyl-tRNA synthetase family. TyrS type 1 subfamily. As to quaternary structure, homodimer.

The protein resides in the cytoplasm. The enzyme catalyses tRNA(Tyr) + L-tyrosine + ATP = L-tyrosyl-tRNA(Tyr) + AMP + diphosphate + H(+). Functionally, catalyzes the attachment of tyrosine to tRNA(Tyr) in a two-step reaction: tyrosine is first activated by ATP to form Tyr-AMP and then transferred to the acceptor end of tRNA(Tyr). This chain is Tyrosine--tRNA ligase, found in Lachnoclostridium phytofermentans (strain ATCC 700394 / DSM 18823 / ISDg) (Clostridium phytofermentans).